The primary structure comprises 323 residues: Nucleotide-binding protein ZMO1325 (323 aa).

25 to 32 provides a ligand contact to ATP; the sequence is GLSGAGKS. 78-81 is a binding site for GTP; sequence DSRT.

The protein belongs to the RapZ-like family.

In terms of biological role, displays ATPase and GTPase activities. This is Nucleotide-binding protein ZMO1325 from Zymomonas mobilis subsp. mobilis (strain ATCC 31821 / ZM4 / CP4).